The sequence spans 189 residues: Segregation and condensation protein B (189 aa).

The protein belongs to the ScpB family. Homodimer. Homodimerization may be required to stabilize the binding of ScpA to the Smc head domains. Component of a cohesin-like complex composed of ScpA, ScpB and the Smc homodimer, in which ScpA and ScpB bind to the head domain of Smc. The presence of the three proteins is required for the association of the complex with DNA.

The protein resides in the cytoplasm. Participates in chromosomal partition during cell division. May act via the formation of a condensin-like complex containing Smc and ScpA that pull DNA away from mid-cell into both cell halves. This is Segregation and condensation protein B from Streptococcus mitis.